The sequence spans 255 residues: Taurine import ATP-binding protein TauB (255 aa).

The region spanning 2 to 229 (LQISHLYADY…RFVAGESSRS (228 aa)) is the ABC transporter domain. 34–41 (GPSGCGKT) contributes to the ATP binding site.

It belongs to the ABC transporter superfamily. Taurine importer (TC 3.A.1.17.1) family. As to quaternary structure, the complex is composed of two ATP-binding proteins (TauB), two transmembrane proteins (TauC) and a solute-binding protein (TauA).

Its subcellular location is the cell inner membrane. The catalysed reaction is taurine(out) + ATP + H2O = taurine(in) + ADP + phosphate + H(+). Functionally, part of the ABC transporter complex TauABC involved in taurine import. Responsible for energy coupling to the transport system. This chain is Taurine import ATP-binding protein TauB, found in Shigella flexneri serotype 5b (strain 8401).